Reading from the N-terminus, the 395-residue chain is MGIKHLFQVIQENAPDAVKSGDIKNHFGRKVAIDASMSIYSFLIAVRSEGQQLMSESGETTSHLMGMFYRTLRMVDNGIKPLYVFDGAPPKLKSGELAKRTARKAEATEAHEEAKETGTAEEIEKFSRRTVRVTREHNAECKKLLKLMGVPYIDAPTEAEAQCAVLARAGKVYAAASEDMDTLCFEAPILLRHLTFSEQRKEPIQEIHLNRVLEGLDMDRSQFIDMCILLGCDYLEPIPKVGPNTALKLIREHGSLEKVVEAIESDPKKKYVIPEDWPYQDARELFHHPDVRAADHPECDFKWEAPDIEALVDFLVKDKGFNEDRVRNGAARLQKNLKTAQQSRLEGFFKPVAKTDAEKASLKRKHDEKLQEQKKRKKEEAKAKKEAKAKPRGAA.

An N-domain region spans residues 1–104 (MGIKHLFQVI…GELAKRTARK (104 aa)). Asp-34 is a Mg(2+) binding site. Arg-47 and Arg-70 together coordinate DNA. Mg(2+)-binding residues include Asp-86, Glu-158, Glu-160, Asp-179, and Asp-181. The I-domain stretch occupies residues 122–253 (EIEKFSRRTV…NTALKLIREH (132 aa)). A DNA-binding site is contributed by Glu-158. DNA is bound by residues Gly-231 and Asp-233. Mg(2+) is bound at residue Asp-233. Positions 341-349 (QQSRLEGFF) are interaction with PCNA. Over residues 356 to 389 (DAEKASLKRKHDEKLQEQKKRKKEEAKAKKEAKA) the composition is skewed to basic and acidic residues. Residues 356–395 (DAEKASLKRKHDEKLQEQKKRKKEEAKAKKEAKAKPRGAA) form a disordered region.

It belongs to the XPG/RAD2 endonuclease family. FEN1 subfamily. Interacts with PCNA. Three molecules of fen1 bind to one PCNA trimer with each molecule binding to one PCNA monomer. PCNA stimulates the nuclease activity without altering cleavage specificity. Requires Mg(2+) as cofactor. In terms of processing, phosphorylated. Phosphorylation upon DNA damage induces relocalization to the nuclear plasma.

The protein localises to the nucleus. The protein resides in the nucleolus. It localises to the nucleoplasm. Its subcellular location is the mitochondrion. Structure-specific nuclease with 5'-flap endonuclease and 5'-3' exonuclease activities involved in DNA replication and repair. During DNA replication, cleaves the 5'-overhanging flap structure that is generated by displacement synthesis when DNA polymerase encounters the 5'-end of a downstream Okazaki fragment. It enters the flap from the 5'-end and then tracks to cleave the flap base, leaving a nick for ligation. Also involved in the long patch base excision repair (LP-BER) pathway, by cleaving within the apurinic/apyrimidinic (AP) site-terminated flap. Acts as a genome stabilization factor that prevents flaps from equilibrating into structures that lead to duplications and deletions. Also possesses 5'-3' exonuclease activity on nicked or gapped double-stranded DNA, and exhibits RNase H activity. Also involved in replication and repair of rDNA and in repairing mitochondrial DNA. In Aspergillus clavatus (strain ATCC 1007 / CBS 513.65 / DSM 816 / NCTC 3887 / NRRL 1 / QM 1276 / 107), this protein is Flap endonuclease 1 (fen1).